The primary structure comprises 429 residues: MKLLYLQTLGCAMNVRDSEHIVAELKDEYKLTDDISKADLILINTCSVREKPVHKLFSEIGAFNKVRKNGSKIGVCGCTASHLGEEIFNKAPFVDFVLGARNVSKISEAVKTPKFISTDINYDESEFAFGEFRGSPYKAFVNIMIGCDKKCSYCIVPQTRGKEISIPAEIILNEASKAVQNGAKEIFLLGQNVNNYGKFFSSRHEKMDFSDLLVKISEIKGVERIRFTSPHPLHMDDKFLDIFTSNPKICKSMHMPLQSGSTKVLRDMRRGYDKEWFLNRALRLRKMCPEVSISTDIIVAYPTESEDDFKDTMEVLNEVKFEQIFSFKFSPRPLTAAENLPLIDNEIASKRLEILQSRHNEILDEIMKNQVGKIFDVYFEELRANGEVAGRSFSNFLVSVKGSEDLLGKILPVRIEKASRMVLYGKITA.

In terms of domain architecture, MTTase N-terminal spans 2–115 (KLLYLQTLGC…ISEAVKTPKF (114 aa)). [4Fe-4S] cluster contacts are provided by cysteine 11, cysteine 46, cysteine 78, cysteine 147, cysteine 151, and cysteine 154. The Radical SAM core domain occupies 133 to 365 (RGSPYKAFVN…QSRHNEILDE (233 aa)). Positions 368–429 (KNQVGKIFDV…RMVLYGKITA (62 aa)) constitute a TRAM domain.

This sequence belongs to the methylthiotransferase family. MiaB subfamily. Monomer. The cofactor is [4Fe-4S] cluster.

The protein resides in the cytoplasm. It carries out the reaction N(6)-dimethylallyladenosine(37) in tRNA + (sulfur carrier)-SH + AH2 + 2 S-adenosyl-L-methionine = 2-methylsulfanyl-N(6)-dimethylallyladenosine(37) in tRNA + (sulfur carrier)-H + 5'-deoxyadenosine + L-methionine + A + S-adenosyl-L-homocysteine + 2 H(+). Its function is as follows. Catalyzes the methylthiolation of N6-(dimethylallyl)adenosine (i(6)A), leading to the formation of 2-methylthio-N6-(dimethylallyl)adenosine (ms(2)i(6)A) at position 37 in tRNAs that read codons beginning with uridine. The protein is tRNA-2-methylthio-N(6)-dimethylallyladenosine synthase of Campylobacter hominis (strain ATCC BAA-381 / DSM 21671 / CCUG 45161 / LMG 19568 / NCTC 13146 / CH001A).